A 248-amino-acid polypeptide reads, in one-letter code: Metallo-beta-lactamase type 2 (248 aa).

Residues 1–21 (MKGLKGLLVLALGFTGLQVFG) form the signal peptide. The Zn(2+) site is built by His97, His99, Asp101, His160, and Cys179. Residue Lys182 coordinates substrate. A Zn(2+)-binding site is contributed by His221.

It belongs to the metallo-beta-lactamase superfamily. Class-B beta-lactamase family. As to quaternary structure, monomer. Zn(2+) serves as cofactor.

It is found in the periplasm. It carries out the reaction a beta-lactam + H2O = a substituted beta-amino acid. In terms of biological role, confers resistance to the different beta-lactams antibiotics (penicillin, cephalosporin and carbapenem) via the hydrolysis of the beta-lactam ring. In Elizabethkingia meningoseptica (Chryseobacterium meningosepticum), this protein is Metallo-beta-lactamase type 2 (blaB7).